The chain runs to 434 residues: Vi polysaccharide export inner-membrane protein VexD (434 aa).

The segment covering 1-50 (MENSERIKKWKEERAKVAQESRASRLQQKEDERALRQTEKSADAKSHHNP) has biased composition (basic and acidic residues). The disordered stretch occupies residues 1 to 58 (MENSERIKKWKEERAKVAQESRASRLQQKEDERALRQTEKSADAKSHHNPDAGWSATD). Transmembrane regions (helical) follow at residues 84–104 (LFLY…ILTS) and 409–429 (WLLF…LITI).

It belongs to the BexC/CtrB/KpsE family.

Its subcellular location is the cell inner membrane. May form an ATP-driven capsule polysaccharide export apparatus, in association with the VexA, VexB and VexC proteins. This is Vi polysaccharide export inner-membrane protein VexD (vexD) from Salmonella typhi.